The primary structure comprises 112 residues: Large ribosomal subunit protein uL22 (112 aa).

Belongs to the universal ribosomal protein uL22 family. Part of the 50S ribosomal subunit.

In terms of biological role, this protein binds specifically to 23S rRNA; its binding is stimulated by other ribosomal proteins, e.g. L4, L17, and L20. It is important during the early stages of 50S assembly. It makes multiple contacts with different domains of the 23S rRNA in the assembled 50S subunit and ribosome. Functionally, the globular domain of the protein is located near the polypeptide exit tunnel on the outside of the subunit, while an extended beta-hairpin is found that lines the wall of the exit tunnel in the center of the 70S ribosome. The polypeptide is Large ribosomal subunit protein uL22 (Sorangium cellulosum (strain So ce56) (Polyangium cellulosum (strain So ce56))).